The primary structure comprises 153 residues: Ribosomal RNA large subunit methyltransferase H (153 aa).

The S-adenosyl-L-methionine site is built by L71 and G102.

Belongs to the RNA methyltransferase RlmH family. Homodimer.

The protein localises to the cytoplasm. The catalysed reaction is pseudouridine(1915) in 23S rRNA + S-adenosyl-L-methionine = N(3)-methylpseudouridine(1915) in 23S rRNA + S-adenosyl-L-homocysteine + H(+). Functionally, specifically methylates the pseudouridine at position 1915 (m3Psi1915) in 23S rRNA. The sequence is that of Ribosomal RNA large subunit methyltransferase H from Anaeromyxobacter sp. (strain K).